A 353-amino-acid chain; its full sequence is Nicotinate-nucleotide--dimethylbenzimidazole phosphoribosyltransferase (353 aa).

E320 acts as the Proton acceptor in catalysis.

This sequence belongs to the CobT family.

The catalysed reaction is 5,6-dimethylbenzimidazole + nicotinate beta-D-ribonucleotide = alpha-ribazole 5'-phosphate + nicotinate + H(+). Its pathway is nucleoside biosynthesis; alpha-ribazole biosynthesis; alpha-ribazole from 5,6-dimethylbenzimidazole: step 1/2. Catalyzes the synthesis of alpha-ribazole-5'-phosphate from nicotinate mononucleotide (NAMN) and 5,6-dimethylbenzimidazole (DMB). This is Nicotinate-nucleotide--dimethylbenzimidazole phosphoribosyltransferase from Pseudoalteromonas translucida (strain TAC 125).